A 254-amino-acid polypeptide reads, in one-letter code: Long form salivary protein D7LC (254 aa).

The signal sequence occupies residues 1–19; sequence MNAVITSLLFLSLVGLGYS. 2 disulfides stabilise this stretch: cysteine 36–cysteine 66 and cysteine 62–cysteine 112. Tryptophan 49 lines the thromboxane A2 pocket. Tryptophan 52 contacts leukotriene C4. Tyrosine 63 is a thromboxane A2 binding site. Positions 136 and 154 each coordinate leukotriene C4. Lysine 154 contacts thromboxane A2. 3 cysteine pairs are disulfide-bonded: cysteine 162–cysteine 178, cysteine 174–cysteine 221, and cysteine 211–cysteine 230.

The protein belongs to the PBP/GOBP family.

The protein localises to the secreted. Functionally, modulates blood feeding of female sandflies on vertebrate species by binding and sequestering different mediators involved in the host response. Binds leukotriene C4, leukotriene D4, leukotriene E4 and U-46619, a stable analog of thromboxane A2. Does not bind histamine or serotonin. Inhibits platelet aggregation induced by low concentrations of collagen in thromboxane A2-dependent manner. The chain is Long form salivary protein D7LC from Phlebotomus papatasi (Sandfly).